The following is a 61-amino-acid chain: Small ribosomal subunit protein uS14 (61 aa).

Zn(2+) is bound by residues Cys24, Cys27, Cys40, and Cys43.

Belongs to the universal ribosomal protein uS14 family. Zinc-binding uS14 subfamily. Part of the 30S ribosomal subunit. Contacts proteins S3 and S10. The cofactor is Zn(2+).

In terms of biological role, binds 16S rRNA, required for the assembly of 30S particles and may also be responsible for determining the conformation of the 16S rRNA at the A site. This is Small ribosomal subunit protein uS14 from Nitratidesulfovibrio vulgaris (strain ATCC 29579 / DSM 644 / CCUG 34227 / NCIMB 8303 / VKM B-1760 / Hildenborough) (Desulfovibrio vulgaris).